We begin with the raw amino-acid sequence, 295 residues long: Phosphatidylserine decarboxylase proenzyme (295 aa).

Active-site charge relay system; for autoendoproteolytic cleavage activity residues include Asp-101, His-158, and Ser-262. Ser-262 functions as the Schiff-base intermediate with substrate; via pyruvic acid; for decarboxylase activity in the catalytic mechanism. Pyruvic acid (Ser); by autocatalysis is present on Ser-262.

This sequence belongs to the phosphatidylserine decarboxylase family. PSD-B subfamily. Prokaryotic type I sub-subfamily. Heterodimer of a large membrane-associated beta subunit and a small pyruvoyl-containing alpha subunit. It depends on pyruvate as a cofactor. Is synthesized initially as an inactive proenzyme. Formation of the active enzyme involves a self-maturation process in which the active site pyruvoyl group is generated from an internal serine residue via an autocatalytic post-translational modification. Two non-identical subunits are generated from the proenzyme in this reaction, and the pyruvate is formed at the N-terminus of the alpha chain, which is derived from the carboxyl end of the proenzyme. The autoendoproteolytic cleavage occurs by a canonical serine protease mechanism, in which the side chain hydroxyl group of the serine supplies its oxygen atom to form the C-terminus of the beta chain, while the remainder of the serine residue undergoes an oxidative deamination to produce ammonia and the pyruvoyl prosthetic group on the alpha chain. During this reaction, the Ser that is part of the protease active site of the proenzyme becomes the pyruvoyl prosthetic group, which constitutes an essential element of the active site of the mature decarboxylase.

Its subcellular location is the cell membrane. The catalysed reaction is a 1,2-diacyl-sn-glycero-3-phospho-L-serine + H(+) = a 1,2-diacyl-sn-glycero-3-phosphoethanolamine + CO2. It functions in the pathway phospholipid metabolism; phosphatidylethanolamine biosynthesis; phosphatidylethanolamine from CDP-diacylglycerol: step 2/2. Catalyzes the formation of phosphatidylethanolamine (PtdEtn) from phosphatidylserine (PtdSer). In Pasteurella multocida (strain Pm70), this protein is Phosphatidylserine decarboxylase proenzyme.